Reading from the N-terminus, the 375-residue chain is 23S rRNA (uracil(747)-C(5))-methyltransferase RlmC (375 aa).

Positions 3, 11, 14, and 87 each coordinate [4Fe-4S] cluster. Residues glutamine 212, phenylalanine 241, glutamate 262, and asparagine 307 each coordinate S-adenosyl-L-methionine. Cysteine 334 acts as the Nucleophile in catalysis.

The protein belongs to the class I-like SAM-binding methyltransferase superfamily. RNA M5U methyltransferase family. RlmC subfamily.

It catalyses the reaction uridine(747) in 23S rRNA + S-adenosyl-L-methionine = 5-methyluridine(747) in 23S rRNA + S-adenosyl-L-homocysteine + H(+). Its function is as follows. Catalyzes the formation of 5-methyl-uridine at position 747 (m5U747) in 23S rRNA. This Shigella boydii serotype 18 (strain CDC 3083-94 / BS512) protein is 23S rRNA (uracil(747)-C(5))-methyltransferase RlmC.